The following is a 243-amino-acid chain: UPF0246 protein Sez_1855 (243 aa).

This sequence belongs to the UPF0246 family.

This is UPF0246 protein Sez_1855 from Streptococcus equi subsp. zooepidemicus (strain MGCS10565).